We begin with the raw amino-acid sequence, 230 residues long: Probable septum site-determining protein MinC (230 aa).

The protein belongs to the MinC family. In terms of assembly, interacts with MinD and FtsZ.

Cell division inhibitor that blocks the formation of polar Z ring septums. Rapidly oscillates between the poles of the cell to destabilize FtsZ filaments that have formed before they mature into polar Z rings. Prevents FtsZ polymerization. The polypeptide is Probable septum site-determining protein MinC (Cronobacter sakazakii (strain ATCC BAA-894) (Enterobacter sakazakii)).